An 831-amino-acid polypeptide reads, in one-letter code: Multiphosphoryl transfer protein (831 aa).

Residues 1 to 90 (MLTIQFLCPL…EYILVRFIDS (90 aa)) enclose the HPr domain. The active-site Pros-phosphohistidine intermediate; for HPr activity is the His15. At His15 the chain carries Phosphohistidine; by EI. A PTS EI region spans residues 119-650 (GNVLASGVGV…AVKSQLRQLD (532 aa)). The active-site Tele-phosphohistidine intermediate; for PTS EI activity is the His298. The residue at position 298 (His298) is a Phosphohistidine; by autocatalysis. The phosphoenolpyruvate site is built by Arg405 and Arg441. Mg(2+)-binding residues include Glu540 and Asp564. Phosphoenolpyruvate-binding positions include 563–564 (ND) and Arg574. The active-site Proton donor; for EI activity is Cys611. Positions 685 to 828 (PLLALENIFV…QSILTLLETE (144 aa)) constitute a PTS EIIA type-2 domain. The Tele-phosphohistidine intermediate; for PTS EIIA activity role is filled by His747. Position 747 is a phosphohistidine; by HPr (His747).

Belongs to the PEP-utilizing enzyme family. Mg(2+) is required as a cofactor.

It localises to the cytoplasm. The enzyme catalyses L-histidyl-[protein] + phosphoenolpyruvate = N(pros)-phospho-L-histidyl-[protein] + pyruvate. The catalysed reaction is D-fructose(out) + N(pros)-phospho-L-histidyl-[protein] = D-fructose 1-phosphate(in) + L-histidyl-[protein]. Functionally, multifunctional protein that includes general (non sugar-specific) and sugar-specific components of the phosphoenolpyruvate-dependent sugar phosphotransferase system (sugar PTS). This major carbohydrate active transport system catalyzes the phosphorylation of incoming sugar substrates concomitantly with their translocation across the cell membrane. The enzyme II FryABC PTS system is involved in fructose transport. The protein is Multiphosphoryl transfer protein (fryA) of Shigella flexneri.